Reading from the N-terminus, the 33-residue chain is Brevinin-2PTe (33 aa).

A disulfide bond links Cys27 and Cys33.

Expressed by the skin glands.

It localises to the secreted. Has antibacterial activity against the Gram-positive bacterium S.aureus ATCC 25923 (MIC=36 uM) and the Gram-negative bacterium E.coli ATCC 25726 (MIC=18 uM). This is Brevinin-2PTe from Pulchrana picturata (Malaysian fire frog).